Reading from the N-terminus, the 194-residue chain is Leucyl/phenylalanyl-tRNA--protein transferase (194 aa).

Belongs to the L/F-transferase family.

It is found in the cytoplasm. It catalyses the reaction N-terminal L-lysyl-[protein] + L-leucyl-tRNA(Leu) = N-terminal L-leucyl-L-lysyl-[protein] + tRNA(Leu) + H(+). It carries out the reaction N-terminal L-arginyl-[protein] + L-leucyl-tRNA(Leu) = N-terminal L-leucyl-L-arginyl-[protein] + tRNA(Leu) + H(+). The enzyme catalyses L-phenylalanyl-tRNA(Phe) + an N-terminal L-alpha-aminoacyl-[protein] = an N-terminal L-phenylalanyl-L-alpha-aminoacyl-[protein] + tRNA(Phe). Functions in the N-end rule pathway of protein degradation where it conjugates Leu, Phe and, less efficiently, Met from aminoacyl-tRNAs to the N-termini of proteins containing an N-terminal arginine or lysine. This Chlorobaculum parvum (strain DSM 263 / NCIMB 8327) (Chlorobium vibrioforme subsp. thiosulfatophilum) protein is Leucyl/phenylalanyl-tRNA--protein transferase.